The sequence spans 360 residues: Venom serine protease Bi-VSP (360 aa).

The first 26 residues, 1–26, serve as a signal peptide directing secretion; sequence MTGSKMLFACLALIAFLHPLVHVASA. The propeptide occupies 27–113; that stretch reads QECTTPNNKA…CGFSNVSHTR (87 aa). One can recognise a Clip domain in the interval 28 to 79; the sequence is ECTTPNNKAGKCLGIRVCKPLLEMLQTQGHAAADFLRQSVCKYENNNPIVCC. Cystine bridges form between C29/C78, C39/C68, C45/C79, C104/C230, C147/C163, C278/C296, and C307/C335. N108 carries an N-linked (GlcNAc...) asparagine glycan. In terms of domain architecture, Peptidase S1 spans 114 to 360; sequence VVGGKPAVLG…LDDFILPAMQ (247 aa). H162 functions as the Charge relay system in the catalytic mechanism. Positions 176, 178, 181, and 184 each coordinate Ca(2+). The Charge relay system role is filled by D210. The Charge relay system role is filled by S311.

The protein belongs to the peptidase S1 family. CLIP subfamily. As to expression, expressed by the venom gland.

It is found in the secreted. Functionally, multifunctional venom serine protease. In insects, it acts as an arthropod prophenoloxidase-activating factor, thereby triggering the phenoloxidase cascade. When injected into larvae, it induces a lethal melanization response in target insects by modulating the innate immune response. In mammals, it converts fibrinogen into fibrin, activates prothrombin, and also degrades fibrin. In mammal, it may act in a cooperative manner with the serine protease inhibitor Bi-KTI (AC G3LH89) to promote the spread of bee venom under anti-bleeding conditions. The protein is Venom serine protease Bi-VSP of Bombus ignitus (Bumblebee).